We begin with the raw amino-acid sequence, 194 residues long: Probable RNA 2'-phosphotransferase (194 aa).

This sequence belongs to the KptA/TPT1 family.

Removes the 2'-phosphate from RNA via an intermediate in which the phosphate is ADP-ribosylated by NAD followed by a presumed transesterification to release the RNA and generate ADP-ribose 1''-2''-cyclic phosphate (APPR&gt;P). May function as an ADP-ribosylase. The polypeptide is Probable RNA 2'-phosphotransferase (Burkholderia lata (strain ATCC 17760 / DSM 23089 / LMG 22485 / NCIMB 9086 / R18194 / 383)).